The primary structure comprises 504 residues: Zinc finger CCCH domain-containing protein 18 (504 aa).

Positions Ser40–Arg69 form a coiled coil. The tract at residues Ile77–Pro105 is disordered. The span at Pro94–Glu104 shows a compositional bias: acidic residues. The C3H1-type zinc finger occupies Ser146–Val173. A disordered region spans residues Gly230–His276. Composition is skewed to acidic residues over residues Tyr245–Glu254 and Glu260–Asp272. The region spanning Thr304 to Ala350 is the G-patch domain. Disordered stretches follow at residues Ala351–Arg390, Ala406–Ser432, and Glu482–Phe504. The span at Gly361–Lys374 shows a compositional bias: basic residues. Composition is skewed to basic and acidic residues over residues Lys375–Arg390, Ser413–Ser432, and Ala493–Phe504. Positions Arg430–Lys500 form a coiled coil.

The protein is Zinc finger CCCH domain-containing protein 18 of Oryza sativa subsp. japonica (Rice).